The following is a 382-amino-acid chain: Gibberellin 2-beta-dioxygenase 1 (382 aa).

The Fe2OG dioxygenase domain maps to 189–321 (DSDCLLRINH…RLSTIYFASP (133 aa)). Tyrosine 199 contributes to the 2-oxoglutarate binding site. Fe cation is bound by residues histidine 241, aspartate 243, and histidine 302. 2-oxoglutarate-binding residues include arginine 312 and serine 314.

This sequence belongs to the iron/ascorbate-dependent oxidoreductase family. GA2OX subfamily. The cofactor is L-ascorbate. It depends on Fe(2+) as a cofactor. As to expression, expressed in roots, shoot apex, and in the basal region of leaf primordia and young leaves.

The catalysed reaction is gibberellin A1 + 2-oxoglutarate + O2 = gibberellin A8 + succinate + CO2. In terms of biological role, catalyzes the 2-beta-hydroxylation of several biologically active gibberellins, leading to the homeostatic regulation of their endogenous level. Catabolism of gibberellins (GAs) plays a central role in plant development. Controls the level of bioactive GAs in the shoot apical meristem, which regulates the vegetative to reproductive phase transition. In vitro, converts GA1, GA4, GA9, GA20, and GA44 to the corresponding 2-beta-hydroxylated products GA8, GA34, GA51, GA29, and GA98, respectively. In Oryza sativa subsp. japonica (Rice), this protein is Gibberellin 2-beta-dioxygenase 1.